A 341-amino-acid chain; its full sequence is Phenylalanine--tRNA ligase alpha subunit (341 aa).

A Mg(2+)-binding site is contributed by glutamate 256.

It belongs to the class-II aminoacyl-tRNA synthetase family. Phe-tRNA synthetase alpha subunit type 1 subfamily. In terms of assembly, tetramer of two alpha and two beta subunits. Requires Mg(2+) as cofactor.

It localises to the cytoplasm. The catalysed reaction is tRNA(Phe) + L-phenylalanine + ATP = L-phenylalanyl-tRNA(Phe) + AMP + diphosphate + H(+). This Chlamydia abortus (strain DSM 27085 / S26/3) (Chlamydophila abortus) protein is Phenylalanine--tRNA ligase alpha subunit.